The primary structure comprises 378 residues: Acetylornithine deacetylase (378 aa).

Residue histidine 76 coordinates Zn(2+). Aspartate 78 is an active-site residue. Aspartate 108 lines the Zn(2+) pocket. Glutamate 140 is a catalytic residue. The Zn(2+) site is built by glutamate 141, glutamate 165, and histidine 351.

This sequence belongs to the peptidase M20A family. ArgE subfamily. Homodimer. The cofactor is Zn(2+). Co(2+) is required as a cofactor. Requires glutathione as cofactor.

It is found in the cytoplasm. The enzyme catalyses N(2)-acetyl-L-ornithine + H2O = L-ornithine + acetate. It participates in amino-acid biosynthesis; L-arginine biosynthesis; L-ornithine from N(2)-acetyl-L-ornithine (linear): step 1/1. Catalyzes the hydrolysis of the amide bond of N(2)-acetylated L-amino acids. Cleaves the acetyl group from N-acetyl-L-ornithine to form L-ornithine, an intermediate in L-arginine biosynthesis pathway, and a branchpoint in the synthesis of polyamines. The chain is Acetylornithine deacetylase from Aliivibrio fischeri (strain ATCC 700601 / ES114) (Vibrio fischeri).